We begin with the raw amino-acid sequence, 510 residues long: NAD(P)H-quinone oxidoreductase subunit 2 A, chloroplastic (510 aa).

Transmembrane regions (helical) follow at residues 24 to 44 (LLLFHGSFIFPECILIFGLIL), 57 to 77 (IPWLYFISSTSLVMSITALLF), 99 to 119 (IFQFLILLCSTLCIPLSVEYI), 124 to 144 (MAITEFLLFVLTATLGGMFLC), 149 to 169 (LITIFVAPECFSLCSYLLSGY), 183 to 203 (YLLMGGASSSILVHGFSWLYG), 229 to 249 (ISIALIFITVGIGFKLSPAPF), 295 to 315 (WHLLLEILAILSMILGNLIAI), 323 to 343 (MLAYSSIGQIGYVIIGIIVGD), 354 to 374 (YMLFYISMNLGTFACIVLFGL), 395 to 415 (ALSSALCLLSLGGLPPLAGFF), 418 to 438 (LYLFWCGWQAGLYFLVSIGLL), and 484 to 504 (MILCVIASTIPGISMNPIIAI).

This sequence belongs to the complex I subunit 2 family. As to quaternary structure, NDH is composed of at least 16 different subunits, 5 of which are encoded in the nucleus.

It is found in the plastid. Its subcellular location is the chloroplast thylakoid membrane. It carries out the reaction a plastoquinone + NADH + (n+1) H(+)(in) = a plastoquinol + NAD(+) + n H(+)(out). The enzyme catalyses a plastoquinone + NADPH + (n+1) H(+)(in) = a plastoquinol + NADP(+) + n H(+)(out). In terms of biological role, NDH shuttles electrons from NAD(P)H:plastoquinone, via FMN and iron-sulfur (Fe-S) centers, to quinones in the photosynthetic chain and possibly in a chloroplast respiratory chain. The immediate electron acceptor for the enzyme in this species is believed to be plastoquinone. Couples the redox reaction to proton translocation, and thus conserves the redox energy in a proton gradient. The protein is NAD(P)H-quinone oxidoreductase subunit 2 A, chloroplastic of Piper cenocladum (Ant piper).